We begin with the raw amino-acid sequence, 488 residues long: MSFNHKTIEELHDLLVAKEISATELTQKTLEDIKSREEAVGSFITVSEEAALKQAAAIDAKGIDADNLMSGIPLAVKDNISTKGTLTTAASKMLYNYEPIFDATSVANAYAKDMIVIGKTNMDEFAMGGSTETSYFKKTKNAWDHTKVPGGSSGGSATAVASGQVRLSLGSDTGGSIRQPAAFNGVVGLKPTYGTVSRYGLIAFGSSLDQIGPFAPTVKENAQLLNVIASSDVKDATSAPVRIADYTSKIGRDIKGMKIALPKEYLGEGIDPEIKETVLAAAKQFEALGATVEEVSLPHSKYGVAVYYIIASSEASSNLQRFDGIRYGFRADDAKNLDEIYVNTRSQGFGDEVKRRIMLGTFSLSSGYYDAYFKKAGQVRTLIIEDFDKVFADYDLILGPTTPTVAFGLDTLNHDPVAMYLADLLTIPVNLAGLPGISIPAGFVDGLPVGLQLIGPKYAEETIYQAAAAFETVTDYHKQQPIIFGGDK.

Active-site charge relay system residues include lysine 77 and serine 152. Catalysis depends on serine 176, which acts as the Acyl-ester intermediate.

This sequence belongs to the amidase family. GatA subfamily. In terms of assembly, heterotrimer of A, B and C subunits.

It carries out the reaction L-glutamyl-tRNA(Gln) + L-glutamine + ATP + H2O = L-glutaminyl-tRNA(Gln) + L-glutamate + ADP + phosphate + H(+). Its function is as follows. Allows the formation of correctly charged Gln-tRNA(Gln) through the transamidation of misacylated Glu-tRNA(Gln) in organisms which lack glutaminyl-tRNA synthetase. The reaction takes place in the presence of glutamine and ATP through an activated gamma-phospho-Glu-tRNA(Gln). This Streptococcus pyogenes serotype M2 (strain MGAS10270) protein is Glutamyl-tRNA(Gln) amidotransferase subunit A.